The chain runs to 187 residues: Endoribonuclease YbeY (187 aa).

Zn(2+) contacts are provided by His151, His155, and His161.

The protein belongs to the endoribonuclease YbeY family. The cofactor is Zn(2+).

Its subcellular location is the cytoplasm. Its function is as follows. Single strand-specific metallo-endoribonuclease involved in late-stage 70S ribosome quality control and in maturation of the 3' terminus of the 16S rRNA. The sequence is that of Endoribonuclease YbeY from Prochlorococcus marinus (strain MIT 9313).